A 430-amino-acid chain; its full sequence is Adenylosuccinate synthetase (430 aa).

GTP contacts are provided by residues 12–18 (GDEGKGK) and 40–42 (GHT). The Proton acceptor role is filled by aspartate 13. Mg(2+) is bound by residues aspartate 13 and glycine 40. IMP-binding positions include 13 to 16 (DEGK), 38 to 41 (NAGH), threonine 128, arginine 142, glutamine 223, threonine 238, and arginine 302. Histidine 41 (proton donor) is an active-site residue. Residue 298–304 (TTTGRPR) participates in substrate binding. Residues arginine 304, 330–332 (SID), and 412–414 (SVG) contribute to the GTP site.

It belongs to the adenylosuccinate synthetase family. Homodimer. It depends on Mg(2+) as a cofactor.

It localises to the cytoplasm. It carries out the reaction IMP + L-aspartate + GTP = N(6)-(1,2-dicarboxyethyl)-AMP + GDP + phosphate + 2 H(+). Its pathway is purine metabolism; AMP biosynthesis via de novo pathway; AMP from IMP: step 1/2. In terms of biological role, plays an important role in the de novo pathway of purine nucleotide biosynthesis. Catalyzes the first committed step in the biosynthesis of AMP from IMP. The chain is Adenylosuccinate synthetase from Streptococcus pyogenes serotype M2 (strain MGAS10270).